A 194-amino-acid polypeptide reads, in one-letter code: MYLDQIKSELVEAQDVLNKFISDENNIKLIQEAALLISNSFKQGGKVLSCGNGGSHCDAMHFAEELTGRYRENRPGYPAIAISDASHLSCVSNDFGYEYVFSRYVEAVGQKGDVLFGLSTSGNSKNILNAIEAAKTKGMKVIAMTGKDGGKMAGLADVEIRVPHFRYADRIQEIHIKVIHILMMLIEFEMAKQA.

The region spanning 37–194 (ISNSFKQGGK…LIEFEMAKQA (158 aa)) is the SIS domain. Residue 52–54 (NGG) coordinates substrate. Zn(2+)-binding residues include His-61 and Glu-65. Substrate contacts are provided by residues Glu-65, 93–94 (ND), 119–121 (STS), Ser-124, and Gln-172. Residues Gln-172 and His-180 each contribute to the Zn(2+) site.

This sequence belongs to the SIS family. GmhA subfamily. Homotetramer. Zn(2+) serves as cofactor.

The protein resides in the cytoplasm. It carries out the reaction 2 D-sedoheptulose 7-phosphate = D-glycero-alpha-D-manno-heptose 7-phosphate + D-glycero-beta-D-manno-heptose 7-phosphate. It participates in carbohydrate biosynthesis; D-glycero-D-manno-heptose 7-phosphate biosynthesis; D-glycero-alpha-D-manno-heptose 7-phosphate and D-glycero-beta-D-manno-heptose 7-phosphate from sedoheptulose 7-phosphate: step 1/1. Its pathway is bacterial outer membrane biogenesis; LOS core biosynthesis. Functionally, catalyzes the isomerization of sedoheptulose 7-phosphate in D-glycero-D-manno-heptose 7-phosphate. The polypeptide is Phosphoheptose isomerase (Haemophilus influenzae (strain ATCC 51907 / DSM 11121 / KW20 / Rd)).